Reading from the N-terminus, the 312-residue chain is Olfactory receptor 7D4 (312 aa).

Topologically, residues 1 to 25 (MEAENLTELSKFLLLGLSDDPELQP) are extracellular. N-linked (GlcNAc...) asparagine glycosylation occurs at asparagine 5. Residues 26-46 (VLFGLFLSMYLVTVLGNLLII) traverse the membrane as a helical segment. Residues 47–54 (LAVSSDSH) lie on the Cytoplasmic side of the membrane. The chain crosses the membrane as a helical span at residues 55–75 (LHTPMYFFLSNLSFVDICFIS). Over 76–99 (TTVPKMLVSIQARSKDISYMGCLT) the chain is Extracellular. A disulfide bridge links cysteine 97 with cysteine 189. Residues 100–120 (QVYFLMMFAGMDTFLLAVMAY) traverse the membrane as a helical segment. At 121-139 (DRFVAICHPLHYTVIMNPC) the chain is on the cytoplasmic side. Residues 140-160 (LCGLLVLASWFIIFWFSLVHI) form a helical membrane-spanning segment. Residues 161–197 (LLMKRLTFSTGTEIPHFFCEPAQVLKVACSNTLLNNI) lie on the Extracellular side of the membrane. A helical membrane pass occupies residues 198-217 (VLYVATALLGVFPVAGILFS). Residues 218–237 (YSQIVSSLMGMSSTKGKYKA) lie on the Cytoplasmic side of the membrane. Residues 238–258 (FSTCGSHLCVVSLFYGTGLGV) traverse the membrane as a helical segment. Residues 259–271 (YLSSAVTHSSQSS) are Extracellular-facing. Residues 272–292 (STASVMYAMVTPMLNPFIYSL) traverse the membrane as a helical segment. At 293–312 (RNKDVKGALERLLSRADSCP) the chain is on the cytoplasmic side.

Belongs to the G-protein coupled receptor 1 family. Nasal olfactory epithelium.

The protein localises to the cell membrane. Functionally, odorant receptor. Selectively activated by androstenone and the related odorous steroid androstadienone. The chain is Olfactory receptor 7D4 (OR7D4) from Homo sapiens (Human).